The sequence spans 352 residues: Inner membrane protein YeeA (352 aa).

Over 1-25 (MRADKSLSPFEIRVYRHYRIVHGTR) the chain is Cytoplasmic. 2 consecutive transmembrane segments (helical) span residues 26-46 (VALAFLLTFLIIRLFTIPEST) and 47-67 (WPLVTMVVIMGPISFWGNVVP). Arg-68 is a topological domain (cytoplasmic). The chain crosses the membrane as a helical span at residues 69–89 (AFERIGGTVLGSILGLIALQL). A topological domain (periplasmic) is located at residue Glu-90. Residues 91 to 111 (LISLPLMLVWCAAAMFLCGWL) traverse the membrane as a helical segment. At 112–117 (ALGKKP) the chain is on the cytoplasmic side. Residues 118-138 (YQGLLIGVTLAIVVGSPTGEI) traverse the membrane as a helical segment. Residues 139–147 (DTALWRSGD) are Periplasmic-facing. A helical transmembrane segment spans residues 148–168 (VILGSLLAMLFTGIWPQRAFI). Over 169-352 (HWRIQLAKSL…SNLICRALRK (184 aa)) the chain is Cytoplasmic.

It is found in the cell inner membrane. The chain is Inner membrane protein YeeA (yeeA) from Escherichia coli (strain K12).